The sequence spans 411 residues: Creatinase (411 aa).

Histidine 240 is an active-site residue.

The protein belongs to the peptidase M24 family. Creatinase subfamily. In terms of assembly, homodimer.

It catalyses the reaction creatine + H2O = sarcosine + urea. The chain is Creatinase from Bacillus sp. (strain B-0618).